The sequence spans 229 residues: Transmembrane emp24 domain-containing protein 5 (229 aa).

The first 27 residues, 1-27 (MGDKIWLPFPVLLLAALPPVLLPGAAG), serve as a signal peptide directing secretion. The Lumenal segment spans residues 28–196 (FTPSLDSDFT…IQESNFDRVN (169 aa)). The GOLD domain maps to 45–126 (RECFYQPMPL…EKVIFFELIL (82 aa)). Residues 197–217 (FWSMVNLVVMVVVSAIQVYML) form a helical membrane-spanning segment. Topologically, residues 218 to 229 (KSLFEDKRKSRT) are cytoplasmic.

The protein belongs to the EMP24/GP25L family. As to quaternary structure, interacts with TMED9 and TMED10.

It is found in the endoplasmic reticulum membrane. It localises to the golgi apparatus. The protein resides in the cis-Golgi network membrane. Its subcellular location is the endoplasmic reticulum-Golgi intermediate compartment membrane. Functionally, potential role in vesicular protein trafficking, mainly in the early secretory pathway. Required for the maintenance of the Golgi apparatus; involved in protein exchange between Golgi stacks during assembly. Probably not required for COPI-vesicle-mediated retrograde transport. The protein is Transmembrane emp24 domain-containing protein 5 (TMED5) of Pongo abelii (Sumatran orangutan).